We begin with the raw amino-acid sequence, 508 residues long: MVVLTGHTLTLEEVKRVLYRDELVIASKESMEAVERSRKAVEEIVANKNVVYGINTGFGKFSDVLIAAGDVEELQWNLIHSHACGVGEPFPEEVSRAMLLLRANALLKGYSGVRPIVIERLLDLLNAKIHPVIPQQGSLGASGDLAPLSHLALALLGEGEVFYRGKRVPAIEALSAEGIAPITLKAKEGLALINGTQAMTAMGVVVYLEAEQLAYESEAIAAMTIEGLRGIIDAFDEHVHLVRGYRQQVEVAARIRDYLAGSKLTTRQGELRVQDAYSLRCIPQVHGASWQVLDYVKEKLEIEINAATDNPLIFEGGAKVISGGNFHGQPIAFAMDFMKIAIAELANISERRIERLVNPQLNDLPPFLSPAPGLQSGAMIMQYTAASLVSENKTFAHPASVDSIPSSANQEDHVSMGTIASRHAYAILQNTRRVLAIELICAMQAVEYRGVENMAPKTRKLYEAVRNIVPSITKDRIFSKDIEATAQWLKGVDWPFFLQTITPTNQYS.

Positions 141-143 (ASG) form a cross-link, 5-imidazolinone (Ala-Gly). At Ser-142 the chain carries 2,3-didehydroalanine (Ser).

The protein belongs to the PAL/histidase family. Contains an active site 4-methylidene-imidazol-5-one (MIO), which is formed autocatalytically by cyclization and dehydration of residues Ala-Ser-Gly.

It localises to the cytoplasm. It catalyses the reaction L-histidine = trans-urocanate + NH4(+). The protein operates within amino-acid degradation; L-histidine degradation into L-glutamate; N-formimidoyl-L-glutamate from L-histidine: step 1/3. This Geobacillus sp. (strain WCH70) protein is Histidine ammonia-lyase.